The primary structure comprises 76 residues: DNA-directed RNA polymerase subunit epsilon (76 aa).

Belongs to the RNA polymerase subunit epsilon family. As to quaternary structure, RNAP is composed of a core of 2 alpha, a beta and a beta' subunit. The core is associated with a delta subunit, and at least one of epsilon or omega. When a sigma factor is associated with the core the holoenzyme is formed, which can initiate transcription.

The enzyme catalyses RNA(n) + a ribonucleoside 5'-triphosphate = RNA(n+1) + diphosphate. In terms of biological role, a non-essential component of RNA polymerase (RNAP). This chain is DNA-directed RNA polymerase subunit epsilon, found in Streptococcus equi subsp. equi (strain 4047).